The sequence spans 513 residues: GMP synthase [glutamine-hydrolyzing] (513 aa).

Residues 8 to 198 enclose the Glutamine amidotransferase type-1 domain; sequence KIIVLDYGSQ…ALNTCGAKGN (191 aa). The active-site Nucleophile is the Cys-85. Catalysis depends on residues His-172 and Glu-174. Residues 199–388 enclose the GMPS ATP-PPase domain; the sequence is WSMENFIDMQ…LGMPDEIVWR (190 aa). 226–232 contributes to the ATP binding site; it reads SGGVDSS.

In terms of assembly, homodimer.

The catalysed reaction is XMP + L-glutamine + ATP + H2O = GMP + L-glutamate + AMP + diphosphate + 2 H(+). The protein operates within purine metabolism; GMP biosynthesis; GMP from XMP (L-Gln route): step 1/1. Its function is as follows. Catalyzes the synthesis of GMP from XMP. In Lactococcus lactis subsp. cremoris (strain SK11), this protein is GMP synthase [glutamine-hydrolyzing].